Consider the following 98-residue polypeptide: Protein Frey 1 (98 aa).

The chain crosses the membrane as a helical span at residues 13-29 (AGLSLFLHLILAVALLR). A disordered region spans residues 60–87 (YGILPKHPRPRGPRPLLSRAQQRKRDGP).

As to quaternary structure, interacts with SPPL2C (via active sites); the interaction stabilizes FREY1 protein and inhibits SPPL2C proteolytic activity. Interacts with IZUMO1; the interaction retains IZUMO1 at the endoplasmic reticulum membrane and coordinates IZUMO1 complex assembly.

Its subcellular location is the endoplasmic reticulum membrane. Functionally, key regulator for male fertility expressed transiently in round spermatids where it recruits IZUMO1 at the endoplasmic reticulum (ER) membrane and coordinates the oolemmal binding multimeric complex (IZUMO1 complex) assembly. Upon complete assembly of the IZUMO1 complex, its ER retention is released, facilitating IZUMO1 complex export to the acrosome. Through the interaction with SPPL2C, inhibits its intramembrane protease activity directly accessing the catalytic center of an I-CLiP. This chain is Protein Frey 1, found in Homo sapiens (Human).